Reading from the N-terminus, the 241-residue chain is Phosphatidylglycerophosphatase B (241 aa).

Residues 1-21 form a helical membrane-spanning segment; that stretch reads MFKRLSLYTLLLCLVPFFIWG. Topologically, residues 22 to 52 are periplasmic; sequence ISYQWHGNSQLTQADYWLYLLTETGSVPYAL. The chain crosses the membrane as a helical span at residues 53 to 62; it reads ITCVLFTLLF. The Cytoplasmic portion of the chain corresponds to 63-67; the sequence is AFLFK. Residues 68 to 91 form a helical membrane-spanning segment; it reads NPKQWILGVIVMGISVIATQAAKT. Over 92 to 158 the chain is Periplasmic; sequence GAKALFEEPR…ENETGYSFPS (67 aa). The phosphatase sequence motif I stretch occupies residues 94 to 102; the sequence is KALFEEPRP. Residues 157 to 160 form a phosphatase sequence motif II region; it reads PSGH. A helical transmembrane segment spans residues 159–173; sequence GHTIFAATWLMLAVG. Residue histidine 160 is the Proton donor; for a subset of substrates of the active site. At 174–184 the chain is on the cytoplasmic side; the sequence is FTQLLGNRSFK. The helical transmembrane segment at 185-204 threads the bilayer; it reads AKLLVVGIAVWGLLMLISRV. The phosphatase sequence motif III stretch occupies residues 202–213; the sequence is SRVRLGMHYPID. Residues 205–210 lie on the Periplasmic side of the membrane; the sequence is RLGMHY. Histidine 209 acts as the Nucleophile in catalysis. Residues 211 to 235 form a helical membrane-spanning segment; sequence PIDLLVATLLAWLINSIIFAFLKKK. Over 236-241 the chain is Cytoplasmic; the sequence is AIFVMK.

This sequence belongs to the PA-phosphatase related phosphoesterase family.

It localises to the cell inner membrane. It is found in the cell outer membrane. It carries out the reaction a 1,2-diacyl-sn-glycero-3-phospho-(1'-sn-glycero-3'-phosphate) + H2O = a 1,2-diacyl-sn-glycero-3-phospho-(1'-sn-glycerol) + phosphate. It catalyses the reaction a 1,2-diacyl-sn-glycerol 3-diphosphate + H2O = a 1,2-diacyl-sn-glycero-3-phosphate + phosphate + H(+). The enzyme catalyses a 1,2-diacyl-sn-glycero-3-phosphate + H2O = a 1,2-diacyl-sn-glycerol + phosphate. The catalysed reaction is di-trans,octa-cis-undecaprenyl diphosphate + H2O = di-trans,octa-cis-undecaprenyl phosphate + phosphate + H(+). Its pathway is phospholipid metabolism; phosphatidylglycerol biosynthesis; phosphatidylglycerol from CDP-diacylglycerol: step 2/2. Catalyzes the dephosphorylation of diacylglycerol diphosphate (DGPP) to phosphatidate (PA) and the subsequent dephosphorylation of PA to diacylglycerol (DAG). Also has undecaprenyl pyrophosphate phosphatase activity, required for the biosynthesis of the lipid carrier undecaprenyl phosphate. Can also use lysophosphatidic acid (LPA) and phosphatidylglycerophosphate as substrates. The pattern of activities varies according to subcellular location, PGP phosphatase activity is higher in the cytoplasmic membrane, whereas PA and LPA phosphatase activities are higher in the outer membrane. Activity is independent of a divalent cation ion and insensitive to inhibition by N-ethylmaleimide. The polypeptide is Phosphatidylglycerophosphatase B (pgpB) (Haemophilus influenzae (strain ATCC 51907 / DSM 11121 / KW20 / Rd)).